Reading from the N-terminus, the 483-residue chain is Triplex capsid protein 1 (483 aa).

Residues 24–40 (LLGNNRFIQIGNGLHMT) carry the RIP homotypic interaction motif (RHIM) motif.

The protein belongs to the herpesviridae TRX1 protein family. As to quaternary structure, interacts with TRX2, MCP and capsid vertex component 2/CVC2. Self-assembles into homo-oligomeric amyloid fibrils. Interacts with host ZBP1; this interaction prevents host necroptosis and extrinsic apoptosis. Interacts with host RIPK3.

It localises to the virion. It is found in the host nucleus. In terms of biological role, structural component of the T=16 icosahedral capsid. The capsid is composed of pentamers and hexamers of major capsid protein/MCP, which are linked together by heterotrimers called triplexes. These triplexes are formed by a single molecule of triplex protein 1/TRX1 and two copies of triplex protein 2/TRX2. Additionally, TRX1 is required for efficient transport of TRX2 to the nucleus, which is the site of capsid assembly. Also prevents necroptosis and extrinsic apoptosis by sequestering host ZBP1 into large, insoluble supercomplexes and impairing its ability to interact with RIPK3. The chain is Triplex capsid protein 1 from Varicella-zoster virus (strain Dumas) (HHV-3).